Reading from the N-terminus, the 783-residue chain is uncharacterized protein (783 aa).

The tract at residues 1–22 (MVNTRGYTTLPNVEEPANNSQD) is disordered. Residues 1 to 109 (MVNTRGYTTL…SKIGNVMVMR (109 aa)) lie on the Cytoplasmic side of the membrane. The chain crosses the membrane as a helical; Signal-anchor for type II membrane protein span at residues 110–127 (RIFYIMMMSIIAALIIAS). The Extracellular segment spans residues 128–783 (DRLPNGKARG…NLHGINTNEF (656 aa)). Residues N139 and N213 are each glycosylated (N-linked (GlcNAc...) asparagine). Residues 241–333 (HNGQLNNIPV…GTGDALTPEW (93 aa)) enclose the PA domain. N-linked (GlcNAc...) asparagine glycosylation occurs at N529.

The protein localises to the cell membrane. This is an uncharacterized protein from Saccharomyces cerevisiae (strain ATCC 204508 / S288c) (Baker's yeast).